The primary structure comprises 550 residues: Hydroxylamine reductase (550 aa).

4 residues coordinate [2Fe-2S] cluster: Cys3, Cys6, Cys18, and Cys25. 8 residues coordinate hybrid [4Fe-2O-2S] cluster: His249, Glu273, Cys317, Cys405, Cys433, Cys458, Glu492, and Lys494. Cys405 carries the cysteine persulfide modification.

The protein belongs to the HCP family. The cofactor is [2Fe-2S] cluster. Requires hybrid [4Fe-2O-2S] cluster as cofactor.

The protein resides in the cytoplasm. It catalyses the reaction A + NH4(+) + H2O = hydroxylamine + AH2 + H(+). In terms of biological role, catalyzes the reduction of hydroxylamine to form NH(3) and H(2)O. The protein is Hydroxylamine reductase of Salmonella agona (strain SL483).